The following is a 195-amino-acid chain: Cytochrome b-245 light chain (195 aa).

Topologically, residues 2 to 7 are cytoplasmic; it reads GQIEWA. Residues 8–30 form a helical membrane-spanning segment; the sequence is MWANEQALASGLILITGGIVATA. Residues 31–35 lie on the Extracellular side of the membrane; sequence GRFTQ. A helical membrane pass occupies residues 36–53; it reads WYFGAYSIVAGVFVCLLE. The Cytoplasmic segment spans residues 54 to 69; the sequence is YPRGKRKKGSTMERWG. An intramembrane segment occupies 70–80; that stretch reads QKYMTAVVKLF. Residues 81–86 lie on the Cytoplasmic side of the membrane; it reads GPFTRN. Residues 87-104 form a helical membrane-spanning segment; the sequence is YYVRAVLHLLLSVPAGFL. A topological domain (extracellular) is located at residue Leu-105. A helical membrane pass occupies residues 106-126; that stretch reads ATILGTACLAIASGIYLLAAV. Over 127–195 the chain is Cytoplasmic; sequence RGEQWTPIEP…NPIPVTDEVV (69 aa). Residues 134–195 form a disordered region; that stretch reads IEPKPRERPQ…NPIPVTDEVV (62 aa). Thr-147 carries the post-translational modification Phosphothreonine. Lys-149 participates in a covalent cross-link: Glycyl lysine isopeptide (Lys-Gly) (interchain with G-Cter in ubiquitin). The residue at position 168 (Ser-168) is a Phosphoserine.

The protein belongs to the p22phox family. Component of the phagocyte NADPH oxidase core complex/cytochrome b558 complex, composed of CYBB (heavy chain (beta)) and CYBA (light chain (alpha)). Component of the phagocyte NADPH oxidase complex composed of an obligatory core heterodimer formed by the membrane proteins CYBA and CYBB and the cytosolic regulatory subunits NCF1/p47-phox, NCF2/p67-phox, NCF4/p40-phox and the small GTPase RAC1 or RAC2. Interacts with NCF1 (via SH3 domain). Interacts with SH3PXD2A. Interacts with DUOX1, DUOX2 and TPO. Interacts with NOX4; this interaction mediates superoxide generation. Interacts with calprotectin (S100A8/9). Interacts with GBP7. Interacts with NOXO1. Forms a heterodimer with NOX3 and is essential for activity and cell membrane localization of NOX3. Interacts with NOX1. In terms of processing, phosphorylation at Thr-147 enhances NADPH oxidase activity by promoting NCF1/p47-phox binding. Ubiquitinated at Lys-149 likely by RNF145.

Its subcellular location is the cell membrane. In terms of biological role, subunit of NADPH oxidase complexes that is required for the NADPH oxidase activity that generates, in various cell types, superoxide from molecular oxygen utilizing NADPH as an electron donor. Subunit of the phagocyte NADPH oxidase complex that mediates the transfer of electrons from cytosolic NADPH to O2 to produce the superoxide anion (O2(-)). In the activated complex, electrons are first transferred from NADPH to flavin adenine dinucleotide (FAD) and subsequently transferred via two heme molecules to molecular oxygen, producing superoxide through an outer-sphere reaction. Activation of the NADPH oxidase complex is initiated by the assembly of cytosolic subunits of the NADPH oxidase complex with the core NADPH oxidase complex to form a complex at the plasma membrane or phagosomal membrane. This activation process is initiated by phosphorylation dependent binding of the cytosolic NCF1/p47-phox subunit to the C-terminus of CYBA/p22-phox. Aassociates with NOX3 to form a functional NADPH oxidase constitutively generating superoxide. This chain is Cytochrome b-245 light chain, found in Homo sapiens (Human).